We begin with the raw amino-acid sequence, 29 residues long: Beta-theraphotoxin-Gr1b (29 aa).

Cystine bridges form between C2–C16, C9–C21, and C15–C25. The residue at position 29 (L29) is a Leucine amide.

This sequence belongs to the neurotoxin 30 (phrixotoxin) family. In terms of tissue distribution, expressed by the venom gland.

Its subcellular location is the secreted. Inhibits the voltage-gated sodium channels Nav1.1/SCN1A (IC(50)=360 nM), Nav1.2/SCN2A (IC(50)=600 nM), Nav1.3/SCN3A (IC(50)=1280), Nav1.4/SCN4A (IC(50)=330 nM), Nav1.6/SCN8A (IC(50)=1200 nM), Nav1.7/SCN9A (IC(50)=1-40 nM), and voltage-gated potassium channels Kv11.1/KCNH2 (IC(50)=4.8 uM). Induces analgesia in mammals. This analgesia is mediated by a non-opioid receptor related mechanism. The sequence is that of Beta-theraphotoxin-Gr1b from Grammostola rosea (Chilean rose tarantula).